A 182-amino-acid chain; its full sequence is UPF0397 protein BCAH187_A2708 (182 aa).

Helical transmembrane passes span 9-29, 40-60, 71-91, 114-134, and 142-162; these read VVAI…GFSI, AILT…IGLI, WGIW…MGFI, ITGL…DIIV, and IVIQ…VLGL.

Belongs to the UPF0397 family.

The protein localises to the cell membrane. The protein is UPF0397 protein BCAH187_A2708 of Bacillus cereus (strain AH187).